The primary structure comprises 835 residues: Serine/threonine-protein kinase TNNI3K (835 aa).

Gly-2 is lipidated: N-myristoyl glycine. Residues 21–50 (SESYAIIIERLEDNLQIKENEFQELRHIFG) are a coiled coil. ANK repeat units lie at residues 66–96 (RGLSLLHLCCVCGGNKSHIRALMLKGLRPSR), 100–129 (NGFPALHLAVYKDSPELITSLLHSGADVQQ), 133–162 (GGLTALHIAAIAGHPEAAEVLLQHGANVNV), 166–195 (VFFTPLHIAAYYGHEQVTSVLLKFGADVNV), 199–228 (VGDRPLHLASAKGFFNIVKLLVEEGSKADV), 234–263 (EDHVPLHFCSRFGHHNIVSYLLQSDLEVQP), 269–298 (YGDTPLHLACYNGNFEVAKEIVQVTGTESL), 304–335 (FSETAFHSACTYGKNIDLVKFLLDQNAVNINH), 339–368 (DGHTGLHSACYHGHIRLVQFLLDNGADMNL), and 381–410 (DEQTCLMWAYEKGHDAIVTLLKHYKRPQEE). The Protein kinase domain occupies 463–723 (IEFHEIIGSG…EVVSKLEECL (261 aa)). Residues 469 to 477 (IGSGSFGKV) and Lys-490 each bind ATP. The active-site Proton acceptor is the Asp-588.

It belongs to the protein kinase superfamily. TKL Ser/Thr protein kinase family. MAP kinase kinase kinase subfamily. As to quaternary structure, interacts with TNNI3, ACTC, ACTA1, MYBPC3, AIP, FABP3 and HADHB. Mg(2+) is required as a cofactor. Autophosphorylated.

It is found in the nucleus. The protein resides in the cytoplasm. It catalyses the reaction L-seryl-[protein] + ATP = O-phospho-L-seryl-[protein] + ADP + H(+). It carries out the reaction L-threonyl-[protein] + ATP = O-phospho-L-threonyl-[protein] + ADP + H(+). May play a role in cardiac physiology. This is Serine/threonine-protein kinase TNNI3K from Rattus norvegicus (Rat).